The sequence spans 355 residues: Putative inositol monophosphatase 3 (355 aa).

A helical membrane pass occupies residues 16 to 36; it reads LPATIVAILLTFVLVYFLNFH. Mg(2+) contacts are provided by Glu-127, Asp-167, Leu-169, Asp-170, and Asp-292. Glu-127 serves as a coordination point for substrate. Residues 169-172 and Asp-292 each bind substrate; that span reads LDAT.

Belongs to the inositol monophosphatase superfamily. It depends on Mg(2+) as a cofactor.

It is found in the membrane. It catalyses the reaction a myo-inositol phosphate + H2O = myo-inositol + phosphate. Its pathway is polyol metabolism; myo-inositol biosynthesis; myo-inositol from D-glucose 6-phosphate: step 2/2. The protein is Putative inositol monophosphatase 3 of Drosophila melanogaster (Fruit fly).